We begin with the raw amino-acid sequence, 513 residues long: ATP synthase subunit alpha (513 aa).

An ATP-binding site is contributed by 169 to 176 (GDRQTGKT).

This sequence belongs to the ATPase alpha/beta chains family. In terms of assembly, F-type ATPases have 2 components, CF(1) - the catalytic core - and CF(0) - the membrane proton channel. CF(1) has five subunits: alpha(3), beta(3), gamma(1), delta(1), epsilon(1). CF(0) has three main subunits: a(1), b(2) and c(9-12). The alpha and beta chains form an alternating ring which encloses part of the gamma chain. CF(1) is attached to CF(0) by a central stalk formed by the gamma and epsilon chains, while a peripheral stalk is formed by the delta and b chains.

The protein localises to the cell inner membrane. The catalysed reaction is ATP + H2O + 4 H(+)(in) = ADP + phosphate + 5 H(+)(out). Functionally, produces ATP from ADP in the presence of a proton gradient across the membrane. The alpha chain is a regulatory subunit. This chain is ATP synthase subunit alpha, found in Thioalkalivibrio sulfidiphilus (strain HL-EbGR7).